The primary structure comprises 468 residues: Probable citrate synthase, mitochondrial (468 aa).

Active-site residues include H303, H349, and D404.

Belongs to the citrate synthase family. Homodimer.

It localises to the mitochondrion matrix. It carries out the reaction oxaloacetate + acetyl-CoA + H2O = citrate + CoA + H(+). It participates in carbohydrate metabolism; tricarboxylic acid cycle; isocitrate from oxaloacetate: step 1/2. The polypeptide is Probable citrate synthase, mitochondrial (cts-1) (Caenorhabditis briggsae).